Here is a 391-residue protein sequence, read N- to C-terminus: DNA replication and repair protein RecF (391 aa).

Residue 30 to 37 (GSNGQGKT) coordinates ATP.

This sequence belongs to the RecF family.

Its subcellular location is the cytoplasm. Its function is as follows. The RecF protein is involved in DNA metabolism; it is required for DNA replication and normal SOS inducibility. RecF binds preferentially to single-stranded, linear DNA. It also seems to bind ATP. The sequence is that of DNA replication and repair protein RecF from Saccharopolyspora erythraea (strain ATCC 11635 / DSM 40517 / JCM 4748 / NBRC 13426 / NCIMB 8594 / NRRL 2338).